The primary structure comprises 375 residues: Growth/differentiation factor 8 (375 aa).

The signal sequence occupies residues 1–23 (MQKLAVYVYIYLFMLISVDPVAL). The propeptide occupies 24 to 266 (DDGSQPTENA…VTDTPKRSRR (243 aa)). An N-linked (GlcNAc...) asparagine glycan is attached at asparagine 71. Cystine bridges form between cysteine 272–cysteine 282, cysteine 281–cysteine 340, cysteine 309–cysteine 372, and cysteine 313–cysteine 374.

The protein belongs to the TGF-beta family. As to quaternary structure, homodimer; disulfide-linked.

The protein resides in the secreted. Functionally, acts specifically as a negative regulator of skeletal muscle growth. In Anser anser anser (Western greylag goose), this protein is Growth/differentiation factor 8 (MSTN).